The sequence spans 395 residues: MTRSPRSTAWLRVVSLSLAAFIFNTAEFAPVALLSDIAASFSMSAAQVGLIITIYAWVVGLMSLPCMLLSSDMERRSLLIKIFILFAISNVLSGLAWNYWVLIMARIGVALSHAVFWSITASLVVRLAPADKKAQALSLLATGTALALVLGLPLGRVVGQYLGWRVTFVLIGLIAAVIMVGLMKLLPVLPSSNSGSLKSLPLLLKRPALLCVYGLTVMIVTAHFTAYSYIEPFILKVALLSENFTTILLLIFGGAGIIGSMLFSRYSSKYPAGFLIVSFAFLAVCLLLLLPLSFSGWSLSTLCIVWGIAIMALSLGMQVKVLTLASDATDVAMALYSGIYNIGIGGGALLGNQVITHLGLPDIGYMGAAMAILATVCCIFTFVRYSHVLKTSLTN.

12 consecutive transmembrane segments (helical) span residues 13–33, 48–68, 82–102, 107–127, 134–154, 168–188, 207–227, 244–264, 272–292, 297–317, 331–351, and 363–383; these read VVSL…PVAL, VGLI…PCML, IFIL…YWVL, IGVA…VVRL, AQAL…GLPL, FVLI…LLPV, PALL…FTAY, FTTI…MLFS, AGFL…LLPL, WSLS…SLGM, VAMA…ALLG, and IGYM…FTFV.

It belongs to the major facilitator superfamily. SotB (TC 2.A.1.2) family.

Its subcellular location is the cell inner membrane. Involved in the efflux of sugars. The physiological role may be the reduction of the intracellular concentration of toxic sugars or sugar metabolites. In Pectobacterium atrosepticum (strain SCRI 1043 / ATCC BAA-672) (Erwinia carotovora subsp. atroseptica), this protein is Probable sugar efflux transporter.